Here is a 208-residue protein sequence, read N- to C-terminus: MARYKGPVCRLCRREGEKLYLKGQRCYTDKCAIDRRSYPPGEHGRRRNKPTEYGMQLREKQKVKRIYGILEKQFKRYFDMAEKMPGVTGENFLSILERRLDNVVYRLGLATSRNEARQFVLHGHILVNGRKVNIPSYLVDEGDVISVKDSSRKSKRFKEVFEFNEDLTPPKWLSVNLEKAEGKVVAMPTREDIDYPVEEHLIVEFYSR.

Positions 98-161 (RRLDNVVYRL…RKSKRFKEVF (64 aa)) constitute an S4 RNA-binding domain.

It belongs to the universal ribosomal protein uS4 family. Part of the 30S ribosomal subunit. Contacts protein S5. The interaction surface between S4 and S5 is involved in control of translational fidelity.

Its function is as follows. One of the primary rRNA binding proteins, it binds directly to 16S rRNA where it nucleates assembly of the body of the 30S subunit. With S5 and S12 plays an important role in translational accuracy. This chain is Small ribosomal subunit protein uS4, found in Halothermothrix orenii (strain H 168 / OCM 544 / DSM 9562).